Reading from the N-terminus, the 556-residue chain is MSVSAFNRRWAAVILEALTRHGVRHICIAPGSRSTPLTLAAAENSAFIHHTHFDERGLGHLALGLAKVSKQPVAVIVTSGTAVANLYPALIEAGLTGEKLILLTADRPPELIDCGANQAIRQPGMFASHPTHSISLPRPTQDIPARWLVSTIDHALGTLHAGGVHINCPFAEPLYGEMDDTGLSWQQRLGDWWQDDKPWLREAPRLESEKQRDWFFWRQKRGVVVAGRMSAEEGKKVALWAQTLGWPLIGDVLSQTGQPLPCADLWLGNAKATSELQQAQIVVQLGSSLTGKRLLQWQASCEPEEYWIVDDIEGRLDPAHHRGRRLIANIADWLELHPAEKRQPWCVEIPRLAEQAMQAVIARRDAFGEAQLAHRISDYLPEQGQLFVGNSLVVRLIDALSQLPAGYPVYSNRGASGIDGLLSTAAGVQRASGKPTLAIVGDLSALYDLNALALLRQVSAPLVLIVVNNNGGQIFSLLPTPQSERERFYLMPQNVHFEHAAAMFELKYHHPQNWQELETAFADAWRTPTTTVIEMVVNDTDGAQTLQQLLAQVSHL.

This sequence belongs to the TPP enzyme family. MenD subfamily. Homodimer. It depends on Mg(2+) as a cofactor. Requires Mn(2+) as cofactor. Thiamine diphosphate serves as cofactor.

It catalyses the reaction isochorismate + 2-oxoglutarate + H(+) = 5-enolpyruvoyl-6-hydroxy-2-succinyl-cyclohex-3-ene-1-carboxylate + CO2. It participates in quinol/quinone metabolism; 1,4-dihydroxy-2-naphthoate biosynthesis; 1,4-dihydroxy-2-naphthoate from chorismate: step 2/7. Its pathway is quinol/quinone metabolism; menaquinone biosynthesis. Functionally, catalyzes the thiamine diphosphate-dependent decarboxylation of 2-oxoglutarate and the subsequent addition of the resulting succinic semialdehyde-thiamine pyrophosphate anion to isochorismate to yield 2-succinyl-5-enolpyruvyl-6-hydroxy-3-cyclohexene-1-carboxylate (SEPHCHC). This is 2-succinyl-5-enolpyruvyl-6-hydroxy-3-cyclohexene-1-carboxylate synthase from Shigella flexneri serotype 5b (strain 8401).